A 441-amino-acid chain; its full sequence is MKERSTELVQGFRHSVPYINAHRGKTFVIMLSGEAIAEANFVGIINDIALLHSLGIRLVVVYGARPQIDTLLREQRCDPRYHKQIRITDARTLALVKQAAGQVQLDITARLSMSLSNTPLAGAHINVVSGNFIIAQPLGVDDGVDYCHSGRIRRIDEAALRCQLDAGAIVLLGPVAVSVTGESFNLTTEEIATHLAIKLQAEKLIGFCAAQGVCSDDGSIAAELLPNEAEQRVSALEAAGKAAQASTRFLRGAITACRSGVGRSHLISYLEDGALLQELFSRDGIGTQIVMESAEQIRRANINDIGGILALIRPLEQQGILVRRSREQLEREIERFTLIERDSLTIACAALYPFPQERMGEMACVAVHPDYRNSARGEQLLQRITAQARQMGLEKLFVLTTRSLHWFQERGFQPVEVDMLPQQKQALYNYQRRSKILLTEL.

Positions 295 to 434 (EQIRRANIND…QALYNYQRRS (140 aa)) constitute an N-acetyltransferase domain.

Belongs to the acetyltransferase family. ArgA subfamily. As to quaternary structure, homohexamer.

The protein localises to the cytoplasm. The catalysed reaction is L-glutamate + acetyl-CoA = N-acetyl-L-glutamate + CoA + H(+). The protein operates within amino-acid biosynthesis; L-arginine biosynthesis; N(2)-acetyl-L-ornithine from L-glutamate: step 1/4. This is Amino-acid acetyltransferase from Edwardsiella ictaluri (strain 93-146).